We begin with the raw amino-acid sequence, 161 residues long: MAELNSLSELSAVTNAVEVNKNIAPVHVQKLDSQGRSYATGKRKDAVARVWIKPGTGKITVNNKEFEQYFARPVLRMILRQPIVIAKRDTQYDVVATVAGGGLSGQAGAIRHGISKALTYYEPALRTILKKGGFLTRDSRVVERKKYGKAKARRSFQFSKR.

Belongs to the universal ribosomal protein uS9 family.

The polypeptide is Small ribosomal subunit protein uS9 (Bartonella bacilliformis (strain ATCC 35685 / KC583 / Herrer 020/F12,63)).